Consider the following 295-residue polypeptide: Ribosomal protein L11 methyltransferase (295 aa).

S-adenosyl-L-methionine contacts are provided by Thr-150, Gly-171, Asp-193, and Asn-232.

Belongs to the methyltransferase superfamily. PrmA family.

It localises to the cytoplasm. It carries out the reaction L-lysyl-[protein] + 3 S-adenosyl-L-methionine = N(6),N(6),N(6)-trimethyl-L-lysyl-[protein] + 3 S-adenosyl-L-homocysteine + 3 H(+). In terms of biological role, methylates ribosomal protein L11. In Neisseria meningitidis serogroup A / serotype 4A (strain DSM 15465 / Z2491), this protein is Ribosomal protein L11 methyltransferase.